The chain runs to 124 residues: UPF0344 protein BH2983 (124 aa).

Transmembrane regions (helical) follow at residues 15–35 (GSWA…KAGK), 40–60 (KILH…GAGM), 61–81 (LVYW…IVLI), and 102–122 (IYWI…YNVI).

It belongs to the UPF0344 family.

It is found in the cell membrane. The polypeptide is UPF0344 protein BH2983 (Halalkalibacterium halodurans (strain ATCC BAA-125 / DSM 18197 / FERM 7344 / JCM 9153 / C-125) (Bacillus halodurans)).